Consider the following 151-residue polypeptide: Protein Smg homolog (151 aa).

This sequence belongs to the Smg family.

This Laribacter hongkongensis (strain HLHK9) protein is Protein Smg homolog.